A 69-amino-acid polypeptide reads, in one-letter code: Large ribosomal subunit protein bL31 (69 aa).

Zn(2+) is bound by residues Cys17, Cys19, Cys37, and Cys40.

Belongs to the bacterial ribosomal protein bL31 family. Type A subfamily. As to quaternary structure, part of the 50S ribosomal subunit. The cofactor is Zn(2+).

Its function is as follows. Binds the 23S rRNA. The protein is Large ribosomal subunit protein bL31 of Clostridium botulinum (strain Eklund 17B / Type B).